The following is a 596-amino-acid chain: Elongation factor 4 (596 aa).

Positions Lys-2–Glu-184 constitute a tr-type G domain. Residues Asp-14–Thr-19 and Asn-131–Asp-134 contribute to the GTP site.

This sequence belongs to the TRAFAC class translation factor GTPase superfamily. Classic translation factor GTPase family. LepA subfamily.

The protein resides in the cell inner membrane. The enzyme catalyses GTP + H2O = GDP + phosphate + H(+). Its function is as follows. Required for accurate and efficient protein synthesis under certain stress conditions. May act as a fidelity factor of the translation reaction, by catalyzing a one-codon backward translocation of tRNAs on improperly translocated ribosomes. Back-translocation proceeds from a post-translocation (POST) complex to a pre-translocation (PRE) complex, thus giving elongation factor G a second chance to translocate the tRNAs correctly. Binds to ribosomes in a GTP-dependent manner. The polypeptide is Elongation factor 4 (Shewanella sediminis (strain HAW-EB3)).